The following is a 191-amino-acid chain: Somatotropin (191 aa).

Zn(2+) is bound at residue His-20. An intrachain disulfide couples Cys-53 to Cys-164. A Zn(2+)-binding site is contributed by Glu-173. An intrachain disulfide couples Cys-181 to Cys-189.

It belongs to the somatotropin/prolactin family.

The protein resides in the secreted. Functionally, growth hormone plays an important role in growth control and is involved in the regulation of several anabolic processes. Implicated as an osmoregulatory substance important for seawater adaptation. In Chelonia mydas (Green sea-turtle), this protein is Somatotropin (GH).